Here is a 380-residue protein sequence, read N- to C-terminus: Putative glutamate--cysteine ligase 2 (380 aa).

The protein belongs to the glutamate--cysteine ligase type 2 family. YbdK subfamily.

The enzyme catalyses L-cysteine + L-glutamate + ATP = gamma-L-glutamyl-L-cysteine + ADP + phosphate + H(+). In terms of biological role, ATP-dependent carboxylate-amine ligase which exhibits weak glutamate--cysteine ligase activity. The chain is Putative glutamate--cysteine ligase 2 from Pseudomonas entomophila (strain L48).